The primary structure comprises 310 residues: MRLVFAGTPEPALPSLQRLIDSDRHEVIAVMTRPDAVAGRRGRPSPSPVAQLAAAHGIPVLKPARPNSGEFVAELSALSPDCCAVVAYGALLGDALLAVPAHGWVNLHFSVLPAWRGAAPVQAALAAGDEVTGATTFQIERSLDSGPVYGVVTETIRPTDTAGDLLERLSVSGAGLLEATMDGIEDGTLTAVPQPPEGVSVAPKVTVDDARIRWELPAHVVDRRVRSVTPNPGAWTMIGDQRIKVGPVTVAGDGPKGLEPGEIRVDKKHIHVGTGSDAVLLGTVQPPGKKPMNAADWARGARLDENGWAR.

110–113 serves as a coordination point for (6S)-5,6,7,8-tetrahydrofolate; the sequence is SVLP.

It belongs to the Fmt family.

It carries out the reaction L-methionyl-tRNA(fMet) + (6R)-10-formyltetrahydrofolate = N-formyl-L-methionyl-tRNA(fMet) + (6S)-5,6,7,8-tetrahydrofolate + H(+). In terms of biological role, attaches a formyl group to the free amino group of methionyl-tRNA(fMet). The formyl group appears to play a dual role in the initiator identity of N-formylmethionyl-tRNA by promoting its recognition by IF2 and preventing the misappropriation of this tRNA by the elongation apparatus. The polypeptide is Methionyl-tRNA formyltransferase (Mycolicibacterium vanbaalenii (strain DSM 7251 / JCM 13017 / BCRC 16820 / KCTC 9966 / NRRL B-24157 / PYR-1) (Mycobacterium vanbaalenii)).